The following is a 225-amino-acid chain: MKIVFALGGSVLMPKEGASVDKIKEYADVFKKMKDENNEICIVVGGGNTARTYISVAREFANESFCDEIGILATRMNSMLLISALDNYAVKKVPENFKDAEIILNLNKIVVMGGTHPAHTTDAVAASLAEYIDADMLVVATNVDGVYDKDPRKHADAKKIKQLTTKELLNITGSASIEAGSSTIIDPLASKIIDRAKLKTIVIEGAPEEILKILNNTHSGTIINP.

9-10 (GS) lines the ATP pocket. G46 contributes to the UMP binding site. ATP-binding residues include G47 and R51. UMP is bound by residues D67 and 115-121 (THPAHTT). Residues T141, N142, Y147, and D150 each coordinate ATP.

This sequence belongs to the UMP kinase family. As to quaternary structure, homohexamer.

The protein resides in the cytoplasm. The catalysed reaction is UMP + ATP = UDP + ADP. The protein operates within pyrimidine metabolism; CTP biosynthesis via de novo pathway; UDP from UMP (UMPK route): step 1/1. Inhibited by UTP. In terms of biological role, catalyzes the reversible phosphorylation of UMP to UDP. In Methanococcus aeolicus (strain ATCC BAA-1280 / DSM 17508 / OCM 812 / Nankai-3), this protein is Uridylate kinase.